An 874-amino-acid chain; its full sequence is Valine--tRNA ligase (874 aa).

The short motif at 51–61 is the 'HIGH' region element; that stretch reads PNVTGVLHIGH. The 'KMSKS' region motif lies at 533 to 537; sequence KMSKS. An ATP-binding site is contributed by Lys536. Residues 813 to 873 are a coiled coil; sequence LVARLKKQLE…IKQELDLLEQ (61 aa).

Belongs to the class-I aminoacyl-tRNA synthetase family. ValS type 1 subfamily. In terms of assembly, monomer.

It is found in the cytoplasm. It catalyses the reaction tRNA(Val) + L-valine + ATP = L-valyl-tRNA(Val) + AMP + diphosphate. Functionally, catalyzes the attachment of valine to tRNA(Val). As ValRS can inadvertently accommodate and process structurally similar amino acids such as threonine, to avoid such errors, it has a 'posttransfer' editing activity that hydrolyzes mischarged Thr-tRNA(Val) in a tRNA-dependent manner. This Helicobacter pylori (strain ATCC 700392 / 26695) (Campylobacter pylori) protein is Valine--tRNA ligase.